The sequence spans 253 residues: Cholesterol ring-cleaving hydrolase IpdB subunit (253 aa).

It belongs to the 3-oxoacid CoA-transferase subunit B family. In terms of assembly, heterotetramer composed of 2 IpdA subunits and 2 IpdB subunits.

The catalysed reaction is (3E)-2-(2-carboxylatoethyl)-3-methyl-6-oxocyclohex-1-ene-1-carboxyl-CoA + H2O = 6-methyl-3,7-dioxodecanedioyl-CoA. It participates in steroid metabolism; cholesterol degradation. Its function is as follows. Involved in the final steps of cholesterol and steroid degradation. Opens the last steroid ring of cholesterol by catalyzing the hydrolysis of (3E)-2-(2-carboxylatoethyl)-3-methyl-6-oxocyclohex-1-ene-1-carboxyl-CoA (COCHEA-CoA) to 6-methyl-3,7-dioxodecanedioyl-CoA (MeDODA-CoA). The protein is Cholesterol ring-cleaving hydrolase IpdB subunit of Rhodococcus jostii (strain RHA1).